A 380-amino-acid polypeptide reads, in one-letter code: Putative 8-amino-7-oxononanoate synthase (380 aa).

Arginine 22 contributes to the substrate binding site. 109 to 110 is a pyridoxal 5'-phosphate binding site; it reads GY. Residue histidine 134 coordinates substrate. Residues serine 182, 207–210, and 238–241 contribute to the pyridoxal 5'-phosphate site; these read DEAH and TLSK. Lysine 241 is modified (N6-(pyridoxal phosphate)lysine). Threonine 353 lines the substrate pocket.

Belongs to the class-II pyridoxal-phosphate-dependent aminotransferase family. BioF subfamily. In terms of assembly, homodimer. Requires pyridoxal 5'-phosphate as cofactor.

It catalyses the reaction 6-carboxyhexanoyl-[ACP] + L-alanine + H(+) = (8S)-8-amino-7-oxononanoate + holo-[ACP] + CO2. It participates in cofactor biosynthesis; biotin biosynthesis. Catalyzes the decarboxylative condensation of pimeloyl-[acyl-carrier protein] and L-alanine to produce 8-amino-7-oxononanoate (AON), [acyl-carrier protein], and carbon dioxide. This Gloeothece citriformis (strain PCC 7424) (Cyanothece sp. (strain PCC 7424)) protein is Putative 8-amino-7-oxononanoate synthase (bioF).